A 381-amino-acid chain; its full sequence is UDP-4-amino-4-deoxy-L-arabinose--oxoglutarate aminotransferase (381 aa).

An N6-(pyridoxal phosphate)lysine modification is found at Lys182.

This sequence belongs to the DegT/DnrJ/EryC1 family. ArnB subfamily. As to quaternary structure, homodimer. Pyridoxal 5'-phosphate is required as a cofactor.

The enzyme catalyses UDP-4-amino-4-deoxy-beta-L-arabinose + 2-oxoglutarate = UDP-beta-L-threo-pentopyranos-4-ulose + L-glutamate. It participates in nucleotide-sugar biosynthesis; UDP-4-deoxy-4-formamido-beta-L-arabinose biosynthesis; UDP-4-deoxy-4-formamido-beta-L-arabinose from UDP-alpha-D-glucuronate: step 2/3. The protein operates within bacterial outer membrane biogenesis; lipopolysaccharide biosynthesis. In terms of biological role, catalyzes the conversion of UDP-4-keto-arabinose (UDP-Ara4O) to UDP-4-amino-4-deoxy-L-arabinose (UDP-L-Ara4N). The modified arabinose is attached to lipid A and is required for resistance to polymyxin and cationic antimicrobial peptides. This chain is UDP-4-amino-4-deoxy-L-arabinose--oxoglutarate aminotransferase, found in Photorhabdus laumondii subsp. laumondii (strain DSM 15139 / CIP 105565 / TT01) (Photorhabdus luminescens subsp. laumondii).